Consider the following 341-residue polypeptide: Anthranilate phosphoribosyltransferase (341 aa).

Residues Gly80, 83-84 (GD), Thr88, 90-93 (NIST), 108-116 (KHGNYSVSS), and Ser120 each bind 5-phospho-alpha-D-ribose 1-diphosphate. Gly80 lines the anthranilate pocket. Ser92 is a Mg(2+) binding site. Position 111 (Asn111) interacts with anthranilate. Arg166 is an anthranilate binding site. Mg(2+)-binding residues include Asp224 and Glu225.

Belongs to the anthranilate phosphoribosyltransferase family. As to quaternary structure, homodimer. It depends on Mg(2+) as a cofactor.

It carries out the reaction N-(5-phospho-beta-D-ribosyl)anthranilate + diphosphate = 5-phospho-alpha-D-ribose 1-diphosphate + anthranilate. It functions in the pathway amino-acid biosynthesis; L-tryptophan biosynthesis; L-tryptophan from chorismate: step 2/5. Catalyzes the transfer of the phosphoribosyl group of 5-phosphorylribose-1-pyrophosphate (PRPP) to anthranilate to yield N-(5'-phosphoribosyl)-anthranilate (PRA). In Haloquadratum walsbyi (strain DSM 16790 / HBSQ001), this protein is Anthranilate phosphoribosyltransferase.